A 174-amino-acid chain; its full sequence is MTTIVSVRRNNQVVIAGDGQVSLGNTVMKGNARKVRRLYHNKVLAGFAGGTADAFTLFERFEAKLEMHQGHLLKSAVELAKDWRTDKMLRKLEAMLVVADTEASLIITGNGDVVQPEHDLIAIGSGGNYAQAAALALLQNTELSAQEIADKSLTIAGDICVFTNQFKTIEQLDY.

Thr2 is an active-site residue. Residues Gly157, Cys160, and Thr163 each contribute to the Na(+) site.

It belongs to the peptidase T1B family. HslV subfamily. In terms of assembly, a double ring-shaped homohexamer of HslV is capped on each side by a ring-shaped HslU homohexamer. The assembly of the HslU/HslV complex is dependent on binding of ATP.

Its subcellular location is the cytoplasm. The catalysed reaction is ATP-dependent cleavage of peptide bonds with broad specificity.. Its activity is regulated as follows. Allosterically activated by HslU binding. Protease subunit of a proteasome-like degradation complex believed to be a general protein degrading machinery. In Shewanella denitrificans (strain OS217 / ATCC BAA-1090 / DSM 15013), this protein is ATP-dependent protease subunit HslV.